We begin with the raw amino-acid sequence, 101 residues long: Putative pterin-4-alpha-carbinolamine dehydratase (101 aa).

This sequence belongs to the pterin-4-alpha-carbinolamine dehydratase family.

The enzyme catalyses (4aS,6R)-4a-hydroxy-L-erythro-5,6,7,8-tetrahydrobiopterin = (6R)-L-erythro-6,7-dihydrobiopterin + H2O. This chain is Putative pterin-4-alpha-carbinolamine dehydratase, found in Rhizobium leguminosarum bv. trifolii (strain WSM2304).